The sequence spans 138 residues: MLIPRKVKHRKQHHPKQRGIASGGTSVSFGDYGIQALGHAYVTNRQIESARIAINRHIKRGGKVWINIFPDRPLTKKPAETRMGSGKGSPEWWVANVKPGRVLFELSYPDEKIAREALTRAIHKLPIKARIVTREEQF.

The span at 1–17 shows a compositional bias: basic residues; it reads MLIPRKVKHRKQHHPKQ. A disordered region spans residues 1–24; that stretch reads MLIPRKVKHRKQHHPKQRGIASGG.

The protein belongs to the universal ribosomal protein uL16 family. In terms of assembly, part of the 50S ribosomal subunit.

Functionally, binds 23S rRNA and is also seen to make contacts with the A and possibly P site tRNAs. The sequence is that of Large ribosomal subunit protein uL16 from Mycolicibacterium vanbaalenii (strain DSM 7251 / JCM 13017 / BCRC 16820 / KCTC 9966 / NRRL B-24157 / PYR-1) (Mycobacterium vanbaalenii).